A 255-amino-acid chain; its full sequence is uncharacterized protein (255 aa).

A signal peptide spans M1–G23. The N-palmitoyl cysteine moiety is linked to residue C24. C24 is lipidated: S-diacylglycerol cysteine.

Belongs to the staphylococcal tandem lipoprotein family.

It localises to the cell membrane. This is an uncharacterized protein from Staphylococcus aureus (strain Mu50 / ATCC 700699).